Here is a 323-residue protein sequence, read N- to C-terminus: MKPENKIPVLTRLSDEMKAVVNFQQPGLPPWPADGDIETQRQYYLLERRFWNADAPSMTTRTCAVPTPYGDVTTRLYSPQPTSQATLYYLHGGGFILGNLDTHDRIMRLLARYTGCTVIGIDYSLSPQARYPQAIEETVAVCSYFSQHADEYSLNVEKIGFAGDSAGAMLALASALWLRDKHIRCGNVIAILLWYGLYGLQDSVSRRLFGGAWDGLTREDLDMYEKAYLRNDEDRESPWYCLFNNDLTRDVPPCFIASAEFDPLIDDSRLLHKTLQAHQQPCEYKMYPGTLHAFLHYSRMMTIADDALQDGARFFMARMKTPR.

The Involved in the stabilization of the negatively charged intermediate by the formation of the oxyanion hole signature appears at 91–93 (HGG). Active-site residues include Ser-165, Asp-262, and His-292.

The protein belongs to the 'GDXG' lipolytic enzyme family. Homodimer. Interacts with MalT and MelA.

It localises to the cytoplasm. Displays esterase activity towards short chain fatty esters (acyl chain length of up to 8 carbons). Able to hydrolyze triacetylglycerol (triacetin) and tributyrylglycerol (tributyrin), but not trioleylglycerol (triolein) or cholesterol oleate. Negatively regulates MalT activity by antagonizing maltotriose binding. Inhibits MelA galactosidase activity. The chain is Acetyl esterase from Salmonella dublin (strain CT_02021853).